Consider the following 153-residue polypeptide: Putative pre-16S rRNA nuclease (153 aa).

It belongs to the YqgF nuclease family.

It localises to the cytoplasm. Functionally, could be a nuclease involved in processing of the 5'-end of pre-16S rRNA. This Prochlorococcus marinus (strain MIT 9301) protein is Putative pre-16S rRNA nuclease.